A 157-amino-acid polypeptide reads, in one-letter code: 2-C-methyl-D-erythritol 2,4-cyclodiphosphate synthase (157 aa).

A divalent metal cation is bound by residues Asp-8 and His-10. Residues Asp-8–His-10 and His-34–Ser-35 each bind 4-CDP-2-C-methyl-D-erythritol 2-phosphate. His-42 contributes to the a divalent metal cation binding site. Residues Asp-56–Gly-58, Thr-132–Glu-135, and Arg-142 each bind 4-CDP-2-C-methyl-D-erythritol 2-phosphate.

This sequence belongs to the IspF family. Homotrimer. It depends on a divalent metal cation as a cofactor.

The enzyme catalyses 4-CDP-2-C-methyl-D-erythritol 2-phosphate = 2-C-methyl-D-erythritol 2,4-cyclic diphosphate + CMP. The protein operates within isoprenoid biosynthesis; isopentenyl diphosphate biosynthesis via DXP pathway; isopentenyl diphosphate from 1-deoxy-D-xylulose 5-phosphate: step 4/6. Functionally, involved in the biosynthesis of isopentenyl diphosphate (IPP) and dimethylallyl diphosphate (DMAPP), two major building blocks of isoprenoid compounds. Catalyzes the conversion of 4-diphosphocytidyl-2-C-methyl-D-erythritol 2-phosphate (CDP-ME2P) to 2-C-methyl-D-erythritol 2,4-cyclodiphosphate (ME-CPP) with a corresponding release of cytidine 5-monophosphate (CMP). The sequence is that of 2-C-methyl-D-erythritol 2,4-cyclodiphosphate synthase from Chlorobium luteolum (strain DSM 273 / BCRC 81028 / 2530) (Pelodictyon luteolum).